A 143-amino-acid polypeptide reads, in one-letter code: Large ribosomal subunit protein uL15 (143 aa).

Residues 1–48 are disordered; it reads MRLNTISPSKGAKHSSKRLGRGIGSGLGKTSGRGHKGQKARSGCSIHR. A compositionally biased stretch (basic residues) spans 11-20; sequence GAKHSSKRLG. The segment covering 21 to 31 has biased composition (gly residues); that stretch reads RGIGSGLGKTS.

This sequence belongs to the universal ribosomal protein uL15 family. As to quaternary structure, part of the 50S ribosomal subunit.

In terms of biological role, binds to the 23S rRNA. In Baumannia cicadellinicola subsp. Homalodisca coagulata, this protein is Large ribosomal subunit protein uL15.